Reading from the N-terminus, the 307-residue chain is Aspartate carbamoyltransferase catalytic subunit (307 aa).

Arg-59 and Thr-60 together coordinate carbamoyl phosphate. Lys-87 lines the L-aspartate pocket. 3 residues coordinate carbamoyl phosphate: Arg-109, His-137, and Gln-140. The L-aspartate site is built by Arg-173 and Arg-223. Gly-266 and Pro-267 together coordinate carbamoyl phosphate.

Belongs to the aspartate/ornithine carbamoyltransferase superfamily. ATCase family. As to quaternary structure, heterododecamer (2C3:3R2) of six catalytic PyrB chains organized as two trimers (C3), and six regulatory PyrI chains organized as three dimers (R2).

The catalysed reaction is carbamoyl phosphate + L-aspartate = N-carbamoyl-L-aspartate + phosphate + H(+). Its pathway is pyrimidine metabolism; UMP biosynthesis via de novo pathway; (S)-dihydroorotate from bicarbonate: step 2/3. Its function is as follows. Catalyzes the condensation of carbamoyl phosphate and aspartate to form carbamoyl aspartate and inorganic phosphate, the committed step in the de novo pyrimidine nucleotide biosynthesis pathway. The sequence is that of Aspartate carbamoyltransferase catalytic subunit from Helicobacter pylori (strain G27).